Reading from the N-terminus, the 129-residue chain is Trefoil factor 2 (129 aa).

A signal peptide spans 1-23 (MGRRDAQLLAALLVLGLCALAGS). P-type domains follow at residues 29–73 (CQCS…FHPL) and 79–122 (DQCV…FFPK). 7 disulfide bridges follow: Cys-29/Cys-127, Cys-31/Cys-58, Cys-42/Cys-57, Cys-52/Cys-69, Cys-81/Cys-107, Cys-91/Cys-106, and Cys-101/Cys-118.

As to expression, stomach.

It localises to the secreted. Functionally, inhibits gastrointestinal motility and gastric acid secretion. Could function as a structural component of gastric mucus, possibly by stabilizing glycoproteins in the mucus gel through interactions with carbohydrate side chains. The protein is Trefoil factor 2 (TFF2) of Homo sapiens (Human).